The sequence spans 465 residues: Cystathionine beta-lyase (465 aa).

The residue at position 213 (Lys213) is an N6-(pyridoxal phosphate)lysine.

It belongs to the trans-sulfuration enzymes family. It depends on pyridoxal 5'-phosphate as a cofactor.

It is found in the cytoplasm. Its subcellular location is the nucleus. It catalyses the reaction L,L-cystathionine + H2O = L-homocysteine + pyruvate + NH4(+). It carries out the reaction an S-substituted L-cysteine + H2O = a thiol + pyruvate + NH4(+). Its pathway is amino-acid biosynthesis; L-methionine biosynthesis via de novo pathway; L-homocysteine from L-cystathionine: step 1/1. The polypeptide is Cystathionine beta-lyase (STR3) (Saccharomyces cerevisiae (strain ATCC 204508 / S288c) (Baker's yeast)).